The sequence spans 511 residues: Mediator of RNA polymerase II transcription subunit 17 (511 aa).

It belongs to the Mediator complex subunit 17 family. In terms of assembly, component of the Mediator complex.

The protein localises to the nucleus. Component of the Mediator complex, a coactivator involved in the regulated transcription of nearly all RNA polymerase II-dependent genes. Mediator functions as a bridge to convey information from gene-specific regulatory proteins to the basal RNA polymerase II transcription machinery. Mediator is recruited to promoters by direct interactions with regulatory proteins and serves as a scaffold for the assembly of a functional preinitiation complex with RNA polymerase II and the general transcription factors. This Yarrowia lipolytica (strain CLIB 122 / E 150) (Yeast) protein is Mediator of RNA polymerase II transcription subunit 17 (SRB4).